The following is a 471-amino-acid chain: tRNA modification GTPase MnmE (471 aa).

3 residues coordinate (6S)-5-formyl-5,6,7,8-tetrahydrofolate: Arg26, Glu83, and Lys136. The TrmE-type G domain maps to 232–393 (GLRVVLAGQP…LRRRLLQLAG (162 aa)). Asn242 is a binding site for K(+). GTP-binding positions include 242 to 247 (NVGKSS), 261 to 267 (TPIAGTT), 286 to 289 (DTAG), 354 to 357 (NKAD), and 374 to 376 (SAR). Residue Ser246 coordinates Mg(2+). Thr261, Ile263, and Thr266 together coordinate K(+). Residue Thr267 coordinates Mg(2+). Lys471 lines the (6S)-5-formyl-5,6,7,8-tetrahydrofolate pocket.

It belongs to the TRAFAC class TrmE-Era-EngA-EngB-Septin-like GTPase superfamily. TrmE GTPase family. Homodimer. Heterotetramer of two MnmE and two MnmG subunits. The cofactor is K(+).

It is found in the cytoplasm. Its function is as follows. Exhibits a very high intrinsic GTPase hydrolysis rate. Involved in the addition of a carboxymethylaminomethyl (cmnm) group at the wobble position (U34) of certain tRNAs, forming tRNA-cmnm(5)s(2)U34. In Methylibium petroleiphilum (strain ATCC BAA-1232 / LMG 22953 / PM1), this protein is tRNA modification GTPase MnmE.